The primary structure comprises 445 residues: tRNA modification GTPase MnmE (445 aa).

3 residues coordinate (6S)-5-formyl-5,6,7,8-tetrahydrofolate: Arg-20, Glu-79, and Lys-119. In terms of domain architecture, TrmE-type G spans 215 to 371 (GLKLAIVGPP…ILKNIENIAE (157 aa)). Asn-225 is a binding site for K(+). GTP contacts are provided by residues 225–230 (NTGKSS), 244–250 (SNIAGTT), and 269–272 (DTAG). Ser-229 provides a ligand contact to Mg(2+). Residues Ser-244, Ile-246, and Thr-249 each coordinate K(+). Thr-250 is a Mg(2+) binding site. Residue Lys-445 coordinates (6S)-5-formyl-5,6,7,8-tetrahydrofolate.

This sequence belongs to the TRAFAC class TrmE-Era-EngA-EngB-Septin-like GTPase superfamily. TrmE GTPase family. As to quaternary structure, homodimer. Heterotetramer of two MnmE and two MnmG subunits. K(+) serves as cofactor.

Its subcellular location is the cytoplasm. Functionally, exhibits a very high intrinsic GTPase hydrolysis rate. Involved in the addition of a carboxymethylaminomethyl (cmnm) group at the wobble position (U34) of certain tRNAs, forming tRNA-cmnm(5)s(2)U34. The protein is tRNA modification GTPase MnmE of Rickettsia akari (strain Hartford).